Here is a 485-residue protein sequence, read N- to C-terminus: DNA polymerase subunit gamma-2 (485 aa).

The tract at residues 28-65 is disordered; that stretch reads GQPELLTERSSPKGGHVKSHAELEGNGEHPEAPGSGEG. The residue at position 38 (Ser38) is a Phosphoserine. A compositionally biased stretch (basic and acidic residues) spans 46 to 58; it reads SHAELEGNGEHPE.

Heterotrimer composed of a catalytic subunit and a homodimer of accessory subunits (POLG:POLG2).

The protein localises to the mitochondrion. It localises to the mitochondrion matrix. It is found in the mitochondrion nucleoid. In terms of biological role, accessory subunit of DNA polymerase gamma solely responsible for replication of mitochondrial DNA (mtDNA). Acts as an allosteric regulator of the holoenzyme activities. Enhances the polymerase activity and the processivity of POLG by increasing its interactions with the DNA template. Suppresses POLG exonucleolytic proofreading especially toward homopolymeric templates bearing mismatched termini. Binds to single-stranded DNA. The chain is DNA polymerase subunit gamma-2 from Homo sapiens (Human).